The chain runs to 687 residues: Protein SDA1 homolog (687 aa).

Disordered stretches follow at residues 517 to 549 (SSDEEQEDEDPSGENQEGEEDGQTRAARISQMR), 561 to 587 (MKQLTKEVQPKLGKKRKRATTTEEPQG), and 615 to 687 (TVIA…KSKI). Over residues 520 to 537 (EEQEDEDPSGENQEGEED) the composition is skewed to acidic residues. Residues 644–666 (EKRRKKNFMMMRHNKLVRGKTKR) show a composition bias toward basic residues. Residues 667 to 680 (SFRDKQIALRDSLL) are compositionally biased toward basic and acidic residues.

Belongs to the SDA1 family.

The protein localises to the nucleus. It localises to the nucleolus. Its function is as follows. Required for 60S pre-ribosomal subunits export to the cytoplasm. This is Protein SDA1 homolog (sdad1) from Nematostella vectensis (Starlet sea anemone).